The following is a 167-amino-acid chain: uncharacterized protein (167 aa).

This is an uncharacterized protein from Acidianus bottle-shaped virus (isolate Italy/Pozzuoli) (ABV).